A 327-amino-acid chain; its full sequence is 2-keto-3-deoxygluconate permease (327 aa).

The next 10 membrane-spanning stretches (helical) occupy residues 10 to 30 (IPGG…TFSP), 42 to 62 (GMIT…GASI), 73 to 93 (KSGT…AIAS), 95 to 115 (IIPE…LALV), 139 to 159 (AGAF…IILG), 163 to 183 (IASF…VGFA), 199 to 219 (VQTL…LTVI), 224 to 244 (LLGI…LIIA), 254 to 274 (TAGI…VLIA), and 289 to 309 (SLVA…TSIW).

This sequence belongs to the KdgT transporter family.

It is found in the cell inner membrane. The enzyme catalyses 2-dehydro-3-deoxy-D-gluconate(in) + H(+)(in) = 2-dehydro-3-deoxy-D-gluconate(out) + H(+)(out). In terms of biological role, catalyzes the proton-dependent uptake of 2-keto-3-deoxygluconate (KDG) into the cell. The protein is 2-keto-3-deoxygluconate permease of Escherichia coli O127:H6 (strain E2348/69 / EPEC).